The primary structure comprises 380 residues: Kappa-type opioid receptor (380 aa).

At M1 to V57 the chain is on the extracellular side. N-linked (GlcNAc...) asparagine glycans are attached at residues N25 and N39. Residues I58–I85 traverse the membrane as a helical segment. Residues R86–N95 are Cytoplasmic-facing. Residues I96–Y119 traverse the membrane as a helical segment. At L120 to K132 the chain is on the extracellular side. A disulfide bridge links C131 with C210. A helical transmembrane segment spans residues V133 to V154. Residues D155–L173 lie on the Cytoplasmic side of the membrane. Residues K174 to L196 traverse the membrane as a helical segment. Over G197–W222 the chain is Extracellular. The helical transmembrane segment at D223 to T247 threads the bilayer. At L248–R274 the chain is on the cytoplasmic side. The helical transmembrane segment at L275–V296 threads the bilayer. Topologically, residues E297–S311 are extracellular. Residues Y312–L333 traverse the membrane as a helical segment. Residues D334–V380 lie on the Cytoplasmic side of the membrane. C345 is lipidated: S-palmitoyl cysteine.

The protein belongs to the G-protein coupled receptor 1 family. As to quaternary structure, interacts with NHERF1. Interacts with GABARAPL1.

Its subcellular location is the cell membrane. G-protein coupled opioid receptor that functions as a receptor for endogenous alpha-neoendorphins and dynorphins, but has low affinity for beta-endorphins. Also functions as a receptor for various synthetic opioids and for the psychoactive diterpene salvinorin A. Ligand binding causes a conformation change that triggers signaling via guanine nucleotide-binding proteins (G proteins) and modulates the activity of down-stream effectors, such as adenylate cyclase. Signaling leads to the inhibition of adenylate cyclase activity. Inhibits neurotransmitter release by reducing calcium ion currents and increasing potassium ion conductance. Plays a role in the perception of pain. Plays a role in mediating reduced physical activity upon treatment with synthetic opioids. Plays a role in the regulation of salivation in response to synthetic opioids. May play a role in arousal and regulation of autonomic and neuroendocrine functions. The protein is Kappa-type opioid receptor (OPRK1) of Bos taurus (Bovine).